A 381-amino-acid chain; its full sequence is Putrescine N-methyltransferase 3 (381 aa).

A disordered region spans residues 21 to 81 (MNGYQNGTSK…TISHDNGNEL (61 aa)). 2 stretches are compositionally biased toward polar residues: residues 23 to 39 (GYQNGTSKHQNGHQNGT) and 46 to 81 (HQNGISEHQNGHQNGTSEHQNGHQNGTISHDNGNEL). Positions 92 to 329 (PGWFSEFSAL…GVIGYMLCST (238 aa)) constitute a PABS domain. Residues glutamine 123, glutamate 198, and 229-230 (DG) each bind S-adenosyl-L-methionine. Aspartate 248 acts as the Proton acceptor in catalysis. Residue tyrosine 317 coordinates S-adenosyl-L-methionine.

The protein belongs to the class I-like SAM-binding methyltransferase superfamily. Putrescine methyltransferase family. In terms of tissue distribution, predominantly expressed in roots.

It catalyses the reaction putrescine + S-adenosyl-L-methionine = N-methylputrescine + S-adenosyl-L-homocysteine + H(+). It functions in the pathway alkaloid biosynthesis; nicotine biosynthesis. Its function is as follows. Involved in the biosynthesis of pyridine alkaloid natural products, leading mainly to the production of anabasine, anatabine, nicotine and nornicotine, effective deterrents against herbivores with antiparasitic and pesticide properties (neurotoxins); nornicotine serves as the precursor in the synthesis of the carcinogen compound N'-nitrosonornicotine (NNN). Methyltransferase that mediates the conversion of putrescine to N-methylputrescine. Promotes leaves ripening. The sequence is that of Putrescine N-methyltransferase 3 from Nicotiana tabacum (Common tobacco).